Reading from the N-terminus, the 416-residue chain is Probable protein phosphatase 2C 49 (416 aa).

Positions 91–411 (RYGVTSVFGR…DNVSVVVVDL (321 aa)) constitute a PPM-type phosphatase domain. The Mn(2+) site is built by Asp-131, Gly-132, and Asp-319. The span at 343 to 360 (PPSPPGCSRPKAVLPPPA) shows a compositional bias: pro residues. The interval 343-368 (PPSPPGCSRPKAVLPPPAGASGGGGG) is disordered. Asp-402 contacts Mn(2+).

It belongs to the PP2C family. It depends on Mg(2+) as a cofactor. Mn(2+) serves as cofactor.

The catalysed reaction is O-phospho-L-seryl-[protein] + H2O = L-seryl-[protein] + phosphate. It catalyses the reaction O-phospho-L-threonyl-[protein] + H2O = L-threonyl-[protein] + phosphate. The protein is Probable protein phosphatase 2C 49 of Oryza sativa subsp. japonica (Rice).